The chain runs to 255 residues: 3-dehydroquinate dehydratase (255 aa).

3-dehydroquinate contacts are provided by residues 47–49 and arginine 83; that span reads EWR. The Proton donor/acceptor role is filled by histidine 145. The active-site Schiff-base intermediate with substrate is the lysine 172. 3-dehydroquinate contacts are provided by arginine 215, serine 234, and glutamine 238.

It belongs to the type-I 3-dehydroquinase family. Homodimer.

The enzyme catalyses 3-dehydroquinate = 3-dehydroshikimate + H2O. It functions in the pathway metabolic intermediate biosynthesis; chorismate biosynthesis; chorismate from D-erythrose 4-phosphate and phosphoenolpyruvate: step 3/7. Its function is as follows. Involved in the third step of the chorismate pathway, which leads to the biosynthesis of aromatic amino acids. Catalyzes the cis-dehydration of 3-dehydroquinate (DHQ) and introduces the first double bond of the aromatic ring to yield 3-dehydroshikimate. The sequence is that of 3-dehydroquinate dehydratase from Clostridium kluyveri (strain NBRC 12016).